The sequence spans 187 residues: GTP cyclohydrolase 1 (187 aa).

Zn(2+) is bound by residues cysteine 74, histidine 77, and cysteine 145.

Belongs to the GTP cyclohydrolase I family. In terms of assembly, homomer.

The enzyme catalyses GTP + H2O = 7,8-dihydroneopterin 3'-triphosphate + formate + H(+). It participates in cofactor biosynthesis; 7,8-dihydroneopterin triphosphate biosynthesis; 7,8-dihydroneopterin triphosphate from GTP: step 1/1. This Sulfurihydrogenibium sp. (strain YO3AOP1) protein is GTP cyclohydrolase 1.